We begin with the raw amino-acid sequence, 239 residues long: Lipoprotein-releasing system ATP-binding protein LolD (239 aa).

An ABC transporter domain is found at 10–239 (VELSGVRKDY…ADGPHRRSGA (230 aa)). Position 46–53 (46–53 (GPSGSGKS)) interacts with ATP.

This sequence belongs to the ABC transporter superfamily. Lipoprotein translocase (TC 3.A.1.125) family. In terms of assembly, the complex is composed of two ATP-binding proteins (LolD) and two transmembrane proteins (LolC and LolE).

It is found in the cell inner membrane. In terms of biological role, part of the ABC transporter complex LolCDE involved in the translocation of mature outer membrane-directed lipoproteins, from the inner membrane to the periplasmic chaperone, LolA. Responsible for the formation of the LolA-lipoprotein complex in an ATP-dependent manner. This is Lipoprotein-releasing system ATP-binding protein LolD from Anaeromyxobacter dehalogenans (strain 2CP-C).